A 174-amino-acid polypeptide reads, in one-letter code: Crossover junction endodeoxyribonuclease RuvC (174 aa).

Catalysis depends on residues D8, E69, and D141. Mg(2+) is bound by residues D8, E69, and D141.

It belongs to the RuvC family. Homodimer which binds Holliday junction (HJ) DNA. The HJ becomes 2-fold symmetrical on binding to RuvC with unstacked arms; it has a different conformation from HJ DNA in complex with RuvA. In the full resolvosome a probable DNA-RuvA(4)-RuvB(12)-RuvC(2) complex forms which resolves the HJ. The cofactor is Mg(2+).

It localises to the cytoplasm. The enzyme catalyses Endonucleolytic cleavage at a junction such as a reciprocal single-stranded crossover between two homologous DNA duplexes (Holliday junction).. The RuvA-RuvB-RuvC complex processes Holliday junction (HJ) DNA during genetic recombination and DNA repair. Endonuclease that resolves HJ intermediates. Cleaves cruciform DNA by making single-stranded nicks across the HJ at symmetrical positions within the homologous arms, yielding a 5'-phosphate and a 3'-hydroxyl group; requires a central core of homology in the junction. The consensus cleavage sequence is 5'-(A/T)TT(C/G)-3'. Cleavage occurs on the 3'-side of the TT dinucleotide at the point of strand exchange. HJ branch migration catalyzed by RuvA-RuvB allows RuvC to scan DNA until it finds its consensus sequence, where it cleaves and resolves the cruciform DNA. The sequence is that of Crossover junction endodeoxyribonuclease RuvC from Xanthomonas axonopodis pv. citri (strain 306).